Reading from the N-terminus, the 510-residue chain is Maturase K (510 aa).

The protein belongs to the intron maturase 2 family. MatK subfamily.

Its subcellular location is the plastid. It localises to the chloroplast. Functionally, usually encoded in the trnK tRNA gene intron. Probably assists in splicing its own and other chloroplast group II introns. The chain is Maturase K from Populus trichocarpa (Western balsam poplar).